The chain runs to 450 residues: Protein indeterminate-domain 13 (450 aa).

Ser-54 carries the phosphoserine modification. 2 consecutive C2H2-type zinc fingers follow at residues 64–86 (FFCE…KRGH) and 106–136 (YICP…SRKH). The Nuclear localization signal signature appears at 128 to 135 (IKKHFSRK). The C2H2-type 2; degenerate zinc-finger motif lies at 141 to 165 (WKCDKCSKKYAVISDWKAHNKICGS). Zn(2+) is bound by residues Cys-143, Cys-146, His-159, Cys-163, Cys-170, Cys-172, His-185, and Cys-189. The segment at 168 to 191 (FRCDCGTLFSRKDSFISHRSFCDV) adopts a CCHC-type 2; atypical zinc-finger fold. Residues 178-190 (RKDSFISHRSFCD) are SHR-binding. Polar residues predominate over residues 248–263 (FGQKFTNSNPTQQQPN). The tract at residues 248 to 280 (FGQKFTNSNPTQQQPNALALSSPPSPRSTSDSV) is disordered.

The protein localises to the nucleus. Probable transcription factor. In Arabidopsis thaliana (Mouse-ear cress), this protein is Protein indeterminate-domain 13.